We begin with the raw amino-acid sequence, 380 residues long: uncharacterized protein (380 aa).

2 disordered regions span residues 278-323 and 345-368; these read AATI…PRVA and SLPGRESTPSDDGGSLHPSGRPRR. The span at 301–319 shows a compositional bias: basic residues; sequence RNGPRRPARRGTSRGRRCA.

This is an uncharacterized protein from Mycobacterium tuberculosis (strain CDC 1551 / Oshkosh).